The sequence spans 179 residues: ATP synthase subunit delta (179 aa).

Belongs to the ATPase delta chain family. In terms of assembly, F-type ATPases have 2 components, F(1) - the catalytic core - and F(0) - the membrane proton channel. F(1) has five subunits: alpha(3), beta(3), gamma(1), delta(1), epsilon(1). F(0) has three main subunits: a(1), b(2) and c(10-14). The alpha and beta chains form an alternating ring which encloses part of the gamma chain. F(1) is attached to F(0) by a central stalk formed by the gamma and epsilon chains, while a peripheral stalk is formed by the delta and b chains.

It localises to the cell membrane. F(1)F(0) ATP synthase produces ATP from ADP in the presence of a proton or sodium gradient. F-type ATPases consist of two structural domains, F(1) containing the extramembraneous catalytic core and F(0) containing the membrane proton channel, linked together by a central stalk and a peripheral stalk. During catalysis, ATP synthesis in the catalytic domain of F(1) is coupled via a rotary mechanism of the central stalk subunits to proton translocation. In terms of biological role, this protein is part of the stalk that links CF(0) to CF(1). It either transmits conformational changes from CF(0) to CF(1) or is implicated in proton conduction. In Staphylococcus saprophyticus subsp. saprophyticus (strain ATCC 15305 / DSM 20229 / NCIMB 8711 / NCTC 7292 / S-41), this protein is ATP synthase subunit delta.